The chain runs to 558 residues: MHTSDISMTQDQDVSTCRLCHHNTDPNSLNIFDDTVQFCKDVSIAEVSKSLWSVQYDRNECLSELICSRCLEILEEAFELRKGMQEREQSLQEQLKEMIKDHPKHRPGLNGNPGVFVPEEGCIIVEVDPENLAESSEEEFALGSDGEYENYDDDDEEEEEDYDEEDEEDGQNGEDVDMPLGMDAAQMAAQQSVANNANTTEARPKRAFLCQYCDLGFTLPAECQEHELAAHDPNAPYCCNFCNIKLVTRPALISHIKTLHDPDRPYVCAHCRKGFVRRSDLKKHTIVHTGVRPFTCNVCSKSFSRNTNLTKHMRIHSGVKPFVCQQCPRSFQTAVEMMRHTRSHGEVKAFQCGRCPYSFSRRDKLIAHQQVHTRRDMEQQQQMGLIPPMEGDLQQQALQAKQKAAAQTKNSRYYHCDVCDRTFQRERDLQRHQALHMDSLFACKTCNQGFNRREQLQRHELEAHGPSFTCGICCISFLHQIELENHLKVHQLQHKMAQRAQEAAILPLKMAEKAPVAMTAPLVQDPQLVRPSAAELSFYSNMIPTMNLGFYSETRPEE.

The ZAD domain occupies 15-94; that stretch reads STCRLCHHNT…QEREQSLQEQ (80 aa). Zn(2+)-binding residues include cysteine 17, cysteine 20, cysteine 67, and cysteine 70. Acidic residues predominate over residues 132 to 177; the sequence is LAESSEEEFALGSDGEYENYDDDDEEEEEDYDEEDEEDGQNGEDVD. The interval 132 to 178 is disordered; sequence LAESSEEEFALGSDGEYENYDDDDEEEEEDYDEEDEEDGQNGEDVDM. C2H2-type zinc fingers lie at residues 208-231, 237-260, 266-288, 294-316, 322-344, 350-372, 414-436, 441-464, and 468-490; these read FLCQ…LAAH, YCCN…KTLH, YVCA…TIVH, FTCN…MRIH, FVCQ…TRSH, FQCG…QQVH, YHCD…QALH, FACK…LEAH, and FTCG…LKVH.

In terms of biological role, may be involved in transcriptional regulation. The function of this protein is unclear. According to one report, it is required for development and viability since mutants display defects in several developmental morphogenetic processes including dorsal closure and head involution, and die by the first instar larval stage. It may also be involved in fwe-mediated cellular competition. However, according to another report, it is not required for development or viability since mutants have no visible phenotype and are fertile. The sequence is that of Zinc finger protein piragua from Drosophila melanogaster (Fruit fly).